The primary structure comprises 514 residues: Putative ankyrin repeat protein R863 (514 aa).

ANK repeat units lie at residues 45-74 (AKID…LKHP), 84-114 (KSLN…DINS), 115-144 (KKNR…DVRA), 146-174 (KDYA…NIKV), 176-204 (DNFA…NIRA), 205-234 (DNNY…DIRA), 236-264 (NNYA…NVKS), 266-294 (NDCA…DVRS), 295-324 (ENDY…NVRA), 325-354 (DNNY…NIRS), 356-384 (NDYA…NFKS), 385-414 (DYDC…DIRV), 415-444 (NNDY…DIRA), 446-474 (NDYA…NVKA), and 476-504 (NNYA…DVRS).

The sequence is that of Putative ankyrin repeat protein R863 from Acanthamoeba polyphaga mimivirus (APMV).